We begin with the raw amino-acid sequence, 473 residues long: Trigger factor (473 aa).

One can recognise a PPIase FKBP-type domain in the interval 171–256 (GDRVTIDFVG…VTKIQAAGEA (86 aa)). The segment at 439-473 (KEALFADEDGDDTTGGKPADKAEAKDESKTEAKAD) is disordered. Residues 456 to 473 (PADKAEAKDESKTEAKAD) show a composition bias toward basic and acidic residues.

It belongs to the FKBP-type PPIase family. Tig subfamily.

It localises to the cytoplasm. It catalyses the reaction [protein]-peptidylproline (omega=180) = [protein]-peptidylproline (omega=0). Involved in protein export. Acts as a chaperone by maintaining the newly synthesized protein in an open conformation. Functions as a peptidyl-prolyl cis-trans isomerase. The polypeptide is Trigger factor (Methylobacterium radiotolerans (strain ATCC 27329 / DSM 1819 / JCM 2831 / NBRC 15690 / NCIMB 10815 / 0-1)).